Here is a 662-residue protein sequence, read N- to C-terminus: MHRGIPKSSKTQTHTQQDRPPQPSTELEETRTSRARHSTTSAQRSTHYDPRTSDRPVSYTMNRTRSRKQTSHRLKNIPVHGNHEATIQHIPESVSKGARSQIERRQPNAINSGSHCTWLVLWCLGMASLFLCSKAQIHWDNLSTIGIIGTDNVHYKIMTRPSHQYLVIKLIPNASLIENCTKAELGEYEKLLNSVLEPINQALTLMTKNVKPLQSLGSGRRQRRFAGVVLAGVALGVATAAQITAGIALHQSNLNAQAIQSLRTSLEQSNKAIEEIREATQETVIAVQGVQDYVNNELVPAMQHMSCELVGQRLGLRLLRYYTELLSIFGPSLRDPISAEISIQALIYALGGEIHKILEKLGYSGSDMIAILESRGIKTKITHVDLPGKFIILSISYPTLSEVKGVIVHRLEAVSYNIGSQEWYTTVPRYIATNGYLISNFDESSCVFVSESAICSQNSLYPMSPLLQQCIRGDTSSCARTLVSGTMGNKFILSKGNIVANCASILCKCYSTSTIINQSPDKLLTFIASDTCPLVEIDGATIQVGGRQYPDMVYEGKVALGPAISLDRLDVGTNLGNALKKLDDAKVLIDSSNQILETVRRSSFNFGSLLSVPILSCTALALLLLIYCCKRRYQQTLKQHTKVDPAFKPDLTGTSKSYVRSL.

Positions 1–73 (MHRGIPKSSK…TRSRKQTSHR (73 aa)) are disordered. An N-terminal signal peptide occupies residues 1-135 (MHRGIPKSSK…MASLFLCSKA (135 aa)). Over residues 8–19 (SSKTQTHTQQDR) the composition is skewed to polar residues. Over residues 64–73 (TRSRKQTSHR) the composition is skewed to basic residues. Topologically, residues 136–608 (QIHWDNLSTI…VRRSSFNFGS (473 aa)) are extracellular. 3 N-linked (GlcNAc...) asparagine; by host glycosylation sites follow: asparagine 141, asparagine 173, and asparagine 179. Residues 225 to 249 (FAGVVLAGVALGVATAAQITAGIAL) form a fusion peptide region. A coiled-coil region spans residues 250–278 (HQSNLNAQAIQSLRTSLEQSNKAIEEIRE). 4 cysteine pairs are disulfide-bonded: cysteine 446-cysteine 455, cysteine 470-cysteine 478, cysteine 502-cysteine 507, and cysteine 509-cysteine 532. Residues 574-599 (NLGNALKKLDDAKVLIDSSNQILETV) are a coiled coil. A helical membrane pass occupies residues 609-629 (LLSVPILSCTALALLLLIYCC). The Cytoplasmic portion of the chain corresponds to 630 to 662 (KRRYQQTLKQHTKVDPAFKPDLTGTSKSYVRSL).

Belongs to the paramyxoviruses fusion glycoprotein family. As to quaternary structure, homotrimer of disulfide-linked F1-F2. The inactive precursor F0 is glycosylated and proteolytically cleaved into F1 and F2 to be functionally active. The cleavage is mediated by cellular proteases during the transport and maturation of the polypeptide.

The protein localises to the virion membrane. It is found in the host cell membrane. Its function is as follows. Class I viral fusion protein. Under the current model, the protein has at least 3 conformational states: pre-fusion native state, pre-hairpin intermediate state, and post-fusion hairpin state. During viral and plasma cell membrane fusion, the heptad repeat (HR) regions assume a trimer-of-hairpins structure, positioning the fusion peptide in close proximity to the C-terminal region of the ectodomain. The formation of this structure appears to drive apposition and subsequent fusion of viral and plasma cell membranes. Directs fusion of viral and cellular membranes leading to delivery of the nucleocapsid into the cytoplasm. This fusion is pH independent and occurs directly at the outer cell membrane. The trimer of F1-F2 (F protein) probably interacts with H at the virion surface. Upon HN binding to its cellular receptor, the hydrophobic fusion peptide is unmasked and interacts with the cellular membrane, inducing the fusion between cell and virion membranes. Later in infection, F proteins expressed at the plasma membrane of infected cells could mediate fusion with adjacent cells to form syncytia, a cytopathic effect that could lead to tissue necrosis. The polypeptide is Fusion glycoprotein F0 (F) (Canine distemper virus (strain Onderstepoort) (CDV)).